The following is a 1265-amino-acid chain: DNA-directed RNA polymerase subunit beta'' (1265 aa).

Zn(2+)-binding residues include C223, C297, C304, and C307.

This sequence belongs to the RNA polymerase beta' chain family. RpoC2 subfamily. As to quaternary structure, in plastids the minimal PEP RNA polymerase catalytic core is composed of four subunits: alpha, beta, beta', and beta''. When a (nuclear-encoded) sigma factor is associated with the core the holoenzyme is formed, which can initiate transcription. Zn(2+) is required as a cofactor.

It localises to the plastid. Its subcellular location is the cyanelle. It carries out the reaction RNA(n) + a ribonucleoside 5'-triphosphate = RNA(n+1) + diphosphate. Functionally, DNA-dependent RNA polymerase catalyzes the transcription of DNA into RNA using the four ribonucleoside triphosphates as substrates. This chain is DNA-directed RNA polymerase subunit beta'', found in Cyanophora paradoxa.